The sequence spans 1068 residues: Putative protein TIC 214 N-terminal part (1068 aa).

A run of 6 helical transmembrane segments spans residues 11–31 (VLWV…LFGI), 68–88 (ITGQ…VLLI), 92–112 (LLTL…KDLI), 131–151 (IFFD…SPVL), 166–186 (FIFL…FVSL), and 213–233 (FSII…VPFI).

The protein belongs to the TIC214 family. Part of the Tic complex.

It is found in the plastid. The protein resides in the chloroplast inner membrane. In terms of biological role, involved in protein precursor import into chloroplasts. May be part of an intermediate translocation complex acting as a protein-conducting channel at the inner envelope. The protein is Putative protein TIC 214 N-terminal part of Marchantia polymorpha (Common liverwort).